Reading from the N-terminus, the 79-residue chain is Large ribosomal subunit protein uL22 (79 aa).

It belongs to the universal ribosomal protein uL22 family. In terms of assembly, part of the 50S ribosomal subunit.

Its function is as follows. This protein binds specifically to 23S rRNA; its binding is stimulated by other ribosomal proteins, e.g. L4, L17, and L20. It is important during the early stages of 50S assembly. It makes multiple contacts with different domains of the 23S rRNA in the assembled 50S subunit and ribosome. In terms of biological role, the globular domain of the protein is located near the polypeptide exit tunnel on the outside of the subunit, while an extended beta-hairpin is found that lines the wall of the exit tunnel in the center of the 70S ribosome. The sequence is that of Large ribosomal subunit protein uL22 (rplV) from Clover proliferation phytoplasma.